The sequence spans 482 residues: MESPVRLSLLYVVLASLLLPGRSVFINRERANNVLQRIRRANSFFEEIKKGNLERECVEEICSFEEAREVFEDNEKTTEFWNKYEDGDQCESSPCQNQGECRDGLGSYTCTCTEGFEGKNCELFVRKLCSLDNGDCDQFCREEQNSVVCSCAKGYFLGNDGKSCLSTAPFPCGKTNKGRAKRSVALNTSNSEPDPEDLMPDADILYPTESPSELLNLNKTEPEANSDDVIRIVGGQECKRGECPWQALLFSDEETDGFCGGTILNEFYILTAAHCLHQAKRFKVRVGDLNTEQEDGGEMVHEVDMIIKHNKFQRDTYDFDIAMLRLKTPITFRENVAPACLPQKDWAEATLMTQKTGIVSGFGRTHEKGRQSKVLKMMEVPYVDRNTCRLSTSFSITQNMFCAGYDAKQEDACQGDSGGPHVTRFKDTYFVTGIVSWGEGCARKGKYGIYTKVTAFLKWIDRSMKARVGPTSETPRLTHPPY.

The first 20 residues, 1–20 (MESPVRLSLLYVVLASLLLP), serve as a signal peptide directing secretion. The propeptide occupies 21–40 (GRSVFINRERANNVLQRIRR). The Gla domain occupies 41-85 (ANSFFEEIKKGNLERECVEEICSFEEAREVFEDNEKTTEFWNKYE). Residues Glu-46, Glu-47, Glu-54, Glu-56, Glu-59, Glu-60, Glu-65, Glu-66, Glu-69, Glu-72, Glu-75, and Glu-79 each carry the 4-carboxyglutamate modification. Cys-57 and Cys-62 are oxidised to a cystine. The region spanning 86–122 (DGDQCESSPCQNQGECRDGLGSYTCTCTEGFEGKNCE) is the EGF-like 1; calcium-binding domain. 11 disulfides stabilise this stretch: Cys-90–Cys-101, Cys-95–Cys-110, Cys-112–Cys-121, Cys-129–Cys-140, Cys-136–Cys-149, Cys-151–Cys-164, Cys-172–Cys-340, Cys-238–Cys-243, Cys-259–Cys-275, Cys-388–Cys-402, and Cys-413–Cys-441. Residue Asp-103 is modified to (3R)-3-hydroxyaspartate. In terms of domain architecture, EGF-like 2 spans 125–165 (VRKLCSLDNGDCDQFCREEQNSVVCSCAKGYFLGNDGKSCL). A propeptide spans 184–231 (VALNTSNSEPDPEDLMPDADILYPTESPSELLNLNKTEPEANSDDVIR) (activation peptide). Asn-187 and Asn-218 each carry an N-linked (GlcNAc...) asparagine glycan. One can recognise a Peptidase S1 domain in the interval 232 to 465 (IVGGQECKRG…FLKWIDRSMK (234 aa)). Active-site charge relay system residues include His-274 and Asp-320. Ser-417 acts as the Charge relay system in catalysis.

This sequence belongs to the peptidase S1 family. In terms of assembly, the two chains are formed from a single-chain precursor by the excision of two Arg residues and are held together by 1 or more disulfide bonds. Forms a heterodimer with SERPINA5. Interacts with ixolaris, an anticoagulant protein from Ixodes scapularis saliva. The vitamin K-dependent, enzymatic carboxylation of some glutamate residues allows the modified protein to bind calcium. Post-translationally, N- and O-glycosylated. In terms of processing, proteolytically cleaved and activated by cathepsin CTSG. The activation peptide is cleaved by factor IXa (in the intrinsic pathway), or by factor VIIa (in the extrinsic pathway). The iron and 2-oxoglutarate dependent 3-hydroxylation of aspartate and asparagine is (R) stereospecific within EGF domains. As to expression, plasma; synthesized in the liver.

The protein resides in the secreted. It carries out the reaction Selective cleavage of Arg-|-Thr and then Arg-|-Ile bonds in prothrombin to form thrombin.. Its activity is regulated as follows. Inhibited by SERPINA5. Functionally, factor Xa is a vitamin K-dependent glycoprotein that converts prothrombin to thrombin in the presence of factor Va, calcium and phospholipid during blood clotting. Factor Xa activates pro-inflammatory signaling pathways in a protease-activated receptor (PAR)-dependent manner. The protein is Coagulation factor X (F10) of Rattus norvegicus (Rat).